The chain runs to 327 residues: BTB/POZ domain-containing protein KCTD12 (327 aa).

Residues 1 to 28 (MALADSARGLPNGGGGGGGSGSSSSSAE) are disordered. Alanine 2 carries the N-acetylalanine modification. Over residues 11–21 (PNGGGGGGGSG) the composition is skewed to gly residues. Residue tyrosine 119 is modified to Phosphotyrosine. The interval 129-204 (LGAPQQPGPG…PLLTPSQSLD (76 aa)) is disordered. A phosphoserine mark is found at serine 153, serine 173, and serine 187. Position 198 is a phosphothreonine (threonine 198). Serine 202 is subject to Phosphoserine.

As to quaternary structure, interacts as a tetramer with GABBR1 and GABBR2. In terms of tissue distribution, expressed in the brain, mainly in the hippocampus and cerebellum.

Its subcellular location is the presynaptic cell membrane. The protein localises to the postsynaptic cell membrane. Functionally, auxiliary subunit of GABA-B receptors that determine the pharmacology and kinetics of the receptor response. Increases agonist potency and markedly alter the G-protein signaling of the receptors by accelerating onset and promoting desensitization. This is BTB/POZ domain-containing protein KCTD12 (Kctd12) from Mus musculus (Mouse).